A 458-amino-acid polypeptide reads, in one-letter code: V-type ATP synthase beta chain (458 aa).

Belongs to the ATPase alpha/beta chains family.

Produces ATP from ADP in the presence of a proton gradient across the membrane. The V-type beta chain is a regulatory subunit. The polypeptide is V-type ATP synthase beta chain (Fusobacterium nucleatum subsp. nucleatum (strain ATCC 25586 / DSM 15643 / BCRC 10681 / CIP 101130 / JCM 8532 / KCTC 2640 / LMG 13131 / VPI 4355)).